A 269-amino-acid chain; its full sequence is Trans-aconitate 2-methyltransferase (269 aa).

It belongs to the methyltransferase superfamily. Tam family.

It is found in the cytoplasm. It carries out the reaction trans-aconitate + S-adenosyl-L-methionine = (E)-3-(methoxycarbonyl)pent-2-enedioate + S-adenosyl-L-homocysteine. In terms of biological role, catalyzes the S-adenosylmethionine monomethyl esterification of trans-aconitate. The chain is Trans-aconitate 2-methyltransferase from Streptomyces avermitilis (strain ATCC 31267 / DSM 46492 / JCM 5070 / NBRC 14893 / NCIMB 12804 / NRRL 8165 / MA-4680).